The primary structure comprises 402 residues: 1-deoxy-D-xylulose 5-phosphate reductoisomerase (402 aa).

T27, G28, S29, I30, G53, K54, N55, and N140 together coordinate NADPH. Position 141 (K141) interacts with 1-deoxy-D-xylulose 5-phosphate. E142 is an NADPH binding site. D166 contacts Mn(2+). Residues S167, E168, S192, and H215 each coordinate 1-deoxy-D-xylulose 5-phosphate. A Mn(2+)-binding site is contributed by E168. An NADPH-binding site is contributed by G221. 1-deoxy-D-xylulose 5-phosphate-binding residues include S228, N233, K234, and E237. Residue E237 coordinates Mn(2+).

It belongs to the DXR family. The cofactor is Mg(2+). Requires Mn(2+) as cofactor.

It catalyses the reaction 2-C-methyl-D-erythritol 4-phosphate + NADP(+) = 1-deoxy-D-xylulose 5-phosphate + NADPH + H(+). The protein operates within isoprenoid biosynthesis; isopentenyl diphosphate biosynthesis via DXP pathway; isopentenyl diphosphate from 1-deoxy-D-xylulose 5-phosphate: step 1/6. Functionally, catalyzes the NADPH-dependent rearrangement and reduction of 1-deoxy-D-xylulose-5-phosphate (DXP) to 2-C-methyl-D-erythritol 4-phosphate (MEP). This Lawsonia intracellularis (strain PHE/MN1-00) protein is 1-deoxy-D-xylulose 5-phosphate reductoisomerase.